We begin with the raw amino-acid sequence, 250 residues long: Aquaporin (250 aa).

Topologically, residues 1-15 are cytoplasmic; the sequence is MTRETLKTLQSTFGE. The chain crosses the membrane as a helical span at residues 16–36; sequence MVASFVFGFAVYSALLGSALT. Residues 37 to 42 lie on the Extracellular side of the membrane; it reads EQSAAR. The chain crosses the membrane as a helical span at residues 43–63; sequence VIVGLTVGFSGICVIYSFCDV. Over 64–86 the chain is Cytoplasmic; that stretch reads TVAHFNPAITLAAILTCKLGVLR. The short motif at 69 to 71 is the NPA element; it reads NPA. Residues 87-107 form a helical membrane-spanning segment; the sequence is GIGYIVAQYIGFILAVCALLP. At 108–133 the chain is on the extracellular side; that stretch reads CSPVGYKETLNIIRPTPSPFGGDNLN. Residues 134–154 form a helical membrane-spanning segment; that stretch reads VFFTEFFLTAILVHVAFATAV. Topologically, residues 155–179 are cytoplasmic; it reads NPYKPKTDTEGKFVDPDEEEPVDRR. The chain crosses the membrane as a helical span at residues 180–200; the sequence is ITAPLCIGLTLGFLAFLGLAS. At 201-224 the chain is on the extracellular side; it reads SGGAFNPGLTLAPVIMSNTWNHFW. Residues 206–208 carry the NPG motif; it reads NPG. Residues 225-245 traverse the membrane as a helical segment; it reads AYFAGQYLGGFVGGLLQVLVL. Over 246–250 the chain is Cytoplasmic; sequence YKLSF.

The protein belongs to the MIP/aquaporin (TC 1.A.8) family.

The protein localises to the cell membrane. Water channel required to facilitate the transport of water across membranes. Involved in osmotolerance. This Encephalitozoon cuniculi (strain GB-M1) (Microsporidian parasite) protein is Aquaporin (AQP).